The following is a 149-amino-acid chain: Deoxyuridine 5'-triphosphate nucleotidohydrolase (149 aa).

Residues 68–70 (RSG), asparagine 81, 85–87 (LID), and methionine 95 contribute to the substrate site.

The protein belongs to the dUTPase family. The cofactor is Mg(2+).

The enzyme catalyses dUTP + H2O = dUMP + diphosphate + H(+). It functions in the pathway pyrimidine metabolism; dUMP biosynthesis; dUMP from dCTP (dUTP route): step 2/2. This enzyme is involved in nucleotide metabolism: it produces dUMP, the immediate precursor of thymidine nucleotides and it decreases the intracellular concentration of dUTP so that uracil cannot be incorporated into DNA. The chain is Deoxyuridine 5'-triphosphate nucleotidohydrolase from Bordetella pertussis (strain Tohama I / ATCC BAA-589 / NCTC 13251).